The chain runs to 357 residues: Histidinol-phosphate aminotransferase (357 aa).

The residue at position 212 (lysine 212) is an N6-(pyridoxal phosphate)lysine.

The protein belongs to the class-II pyridoxal-phosphate-dependent aminotransferase family. Histidinol-phosphate aminotransferase subfamily. Homodimer. It depends on pyridoxal 5'-phosphate as a cofactor.

The catalysed reaction is L-histidinol phosphate + 2-oxoglutarate = 3-(imidazol-4-yl)-2-oxopropyl phosphate + L-glutamate. It participates in amino-acid biosynthesis; L-histidine biosynthesis; L-histidine from 5-phospho-alpha-D-ribose 1-diphosphate: step 7/9. This is Histidinol-phosphate aminotransferase from Pectobacterium carotovorum subsp. carotovorum (strain PC1).